A 427-amino-acid chain; its full sequence is 3-phosphoshikimate 1-carboxyvinyltransferase (427 aa).

Residues Lys22, Ser23, and Arg27 each contribute to the 3-phosphoshikimate site. A phosphoenolpyruvate-binding site is contributed by Lys22. Positions 96 and 124 each coordinate phosphoenolpyruvate. Positions 170, 171, 172, 198, 314, 337, and 341 each coordinate 3-phosphoshikimate. Gln172 serves as a coordination point for phosphoenolpyruvate. Asp314 functions as the Proton acceptor in the catalytic mechanism. Arg345, Arg387, and Lys412 together coordinate phosphoenolpyruvate.

Belongs to the EPSP synthase family. Monomer.

It is found in the cytoplasm. The enzyme catalyses 3-phosphoshikimate + phosphoenolpyruvate = 5-O-(1-carboxyvinyl)-3-phosphoshikimate + phosphate. The protein operates within metabolic intermediate biosynthesis; chorismate biosynthesis; chorismate from D-erythrose 4-phosphate and phosphoenolpyruvate: step 6/7. Its function is as follows. Catalyzes the transfer of the enolpyruvyl moiety of phosphoenolpyruvate (PEP) to the 5-hydroxyl of shikimate-3-phosphate (S3P) to produce enolpyruvyl shikimate-3-phosphate and inorganic phosphate. In Tolumonas auensis (strain DSM 9187 / NBRC 110442 / TA 4), this protein is 3-phosphoshikimate 1-carboxyvinyltransferase.